A 152-amino-acid chain; its full sequence is Psoriasis susceptibility 1 candidate gene 1 protein homolog (152 aa).

Over residues 1–31 (MTCTDQKSHSQRALGTQTPALQGPQLLNTDP) the composition is skewed to polar residues. Disordered regions lie at residues 1–39 (MTCTDQKSHSQRALGTQTPALQGPQLLNTDPSSEETRPP) and 132–152 (APTLLYSPPPSHSPFGLSSLI).

The chain is Psoriasis susceptibility 1 candidate gene 1 protein homolog (PSORS1C1) from Pan troglodytes (Chimpanzee).